Here is a 585-residue protein sequence, read N- to C-terminus: Voltage-gated potassium channel KCNC1 (585 aa).

Over 1-190 (MGQGDESERI…EDPYSSRYAR (190 aa)) the chain is Cytoplasmic. Residue Ser44 is modified to Phosphoserine. Zn(2+)-binding residues include His77, Cys83, Cys104, and Cys105. The interval 121 to 147 (SFGGAPLDNSADDADADGPGDSGDGED) is disordered. Residues Ser130, Ser142, Ser158, and Ser160 each carry the phosphoserine modification. Acidic residues predominate over residues 130 to 147 (SADDADADGPGDSGDGED). A helical membrane pass occupies residues 191 to 209 (YVAFASLFFILVSITTFCL). Residues Asn220 and Asn229 are each glycosylated (N-linked (GlcNAc...) asparagine). The helical transmembrane segment at 248 to 267 (IEGVCVVWFTFEFLMRVVFC) threads the bilayer. The Cytoplasmic portion of the chain corresponds to 268–276 (PNKVEFIKN). A helical membrane pass occupies residues 277–295 (SLNIIDFVAILPFYLEVGL). A helical; Voltage-sensor transmembrane segment spans residues 309-331 (FLRVVRFVRILRIFKLTRHFVGL). The Cytoplasmic portion of the chain corresponds to 332-344 (RVLGHTLRASTNE). A helical membrane pass occupies residues 345 to 366 (FLLLIIFLALGVLIFATMIYYA). K(+)-binding residues include Thr400, Leu401, Gly402, and Tyr403. Residues 400–405 (TLGYGD) carry the Selectivity filter motif. A helical membrane pass occupies residues 415–436 (LVGALCALAGVLTIAMPVPVIV). The Cytoplasmic segment spans residues 437-585 (NNFGMYYSLA…YMPTEAVRVT (149 aa)). Ser474 bears the Phosphoserine mark. Phosphothreonine is present on Thr483.

The protein belongs to the potassium channel family. C (Shaw) (TC 1.A.1.2) subfamily. Kv3.1/KCNC1 sub-subfamily. Homotetramer. Homomultimer. Heteromultimer with KCNG3, KCNG4 and KCNV2. Heteromultimer with KCNC2. Heterotetramer with KCNC3. Interacts with the ancillary subunits KCNE1 and KCNE2; the interaction modulates channel activity. Post-translationally, N-glycosylated; contains sialylated glycans. Expressed in brain. Expressed in globus pallidal neurons of the basal ganglia (at protein level). Detected on Purkinje cells in the cerebellum molecular layer (at protein level).

It is found in the cell membrane. It localises to the cell projection. Its subcellular location is the axon. The protein resides in the presynaptic cell membrane. It catalyses the reaction K(+)(in) = K(+)(out). In terms of biological role, voltage-gated potassium channel that opens in response to the voltage difference across the membrane and through which potassium ions pass in accordance with their electrochemical gradient. The mechanism is time-dependent and inactivation is slow. Plays an important role in the rapid repolarization of fast-firing brain neurons. Can form functional homotetrameric channels and heterotetrameric channels that contain variable proportions of KCNC2, and possibly other family members as well. Contributes to fire sustained trains of very brief action potentials at high frequency in pallidal neurons. This chain is Voltage-gated potassium channel KCNC1, found in Rattus norvegicus (Rat).